The following is a 116-amino-acid chain: Large ribosomal subunit protein uL22 (116 aa).

It belongs to the universal ribosomal protein uL22 family. In terms of assembly, part of the 50S ribosomal subunit.

Its function is as follows. This protein binds specifically to 23S rRNA; its binding is stimulated by other ribosomal proteins, e.g. L4, L17, and L20. It is important during the early stages of 50S assembly. It makes multiple contacts with different domains of the 23S rRNA in the assembled 50S subunit and ribosome. Functionally, the globular domain of the protein is located near the polypeptide exit tunnel on the outside of the subunit, while an extended beta-hairpin is found that lines the wall of the exit tunnel in the center of the 70S ribosome. This chain is Large ribosomal subunit protein uL22, found in Leptospira biflexa serovar Patoc (strain Patoc 1 / Ames).